A 173-amino-acid polypeptide reads, in one-letter code: Archaemetzincin (173 aa).

His-130 contributes to the Zn(2+) binding site. The active-site Proton acceptor is the Glu-131. Zn(2+) contacts are provided by His-134, His-140, Cys-141, Cys-146, Cys-165, and Cys-168.

Belongs to the peptidase M54 family. As to quaternary structure, monomer. The cofactor is Zn(2+).

In terms of biological role, probable zinc metalloprotease whose natural substrate is unknown. This is Archaemetzincin from Natronomonas pharaonis (strain ATCC 35678 / DSM 2160 / CIP 103997 / JCM 8858 / NBRC 14720 / NCIMB 2260 / Gabara) (Halobacterium pharaonis).